The chain runs to 181 residues: Large ribosomal subunit protein uL6 (181 aa).

It belongs to the universal ribosomal protein uL6 family. As to quaternary structure, part of the 50S ribosomal subunit.

This protein binds to the 23S rRNA, and is important in its secondary structure. It is located near the subunit interface in the base of the L7/L12 stalk, and near the tRNA binding site of the peptidyltransferase center. This Desulforudis audaxviator (strain MP104C) protein is Large ribosomal subunit protein uL6.